Consider the following 479-residue polypeptide: Solute carrier family 46 member 2 (479 aa).

Topologically, residues 1 to 23 (MGPGGTCPWSSRLSGFRVRTWIE) are cytoplasmic. A helical membrane pass occupies residues 24–44 (PVVASTQVAGSLYDAGLLLVV). Over 45-80 (KESFKSEAGGSSNYSANQSLVEYQEDQQQKAISNFN) the chain is Extracellular. N57 and N61 each carry an N-linked (GlcNAc...) asparagine glycan. Residues 81–101 (IIYNLVLGLTPLLSAYGLGWL) form a helical membrane-spanning segment. Residues 102–110 (SDRYHRKIS) are Cytoplasmic-facing. Residues 111 to 131 (ICTAMLGFLLSRIGLLLKVML) form a helical membrane-spanning segment. Residues 132 to 140 (DWPVEVMYG) lie on the Extracellular side of the membrane. The chain crosses the membrane as a helical span at residues 141 to 161 (AAALNGLCGSFSAYWSGVMAL). Residues 162–174 (GSLGCSEGRRSVR) are Cytoplasmic-facing. A helical membrane pass occupies residues 175–195 (LILIDLVLGLAGFSGSMASGH). The Extracellular segment spans residues 196–207 (LFKQIVGHSAQG). A helical transmembrane segment spans residues 208-228 (LLLTACSVGCAAFALFYSLFV). The Cytoplasmic segment spans residues 229 to 281 (LKVPESKPNKVHPTVDTVSGMMGTYRTLDPDQQDKQNVPRNPRTPGKGKSSQR). Positions 255-277 (TLDPDQQDKQNVPRNPRTPGKGK) are disordered. The helical transmembrane segment at 282–302 (EVVALLFVGAIIYDLAAVGTV) threads the bilayer. At 303 to 321 (DVMALFVLKEPLHWNQVQL) the chain is on the extracellular side. A helical membrane pass occupies residues 322–342 (GYGMASGYIIFITSFLGVLVF). Residues 343–348 (SRCFRD) lie on the Cytoplasmic side of the membrane. A helical membrane pass occupies residues 349–369 (TTMIIIGMLSFGSGALLLAFV). Over 370–371 (KE) the chain is Extracellular. The helical transmembrane segment at 372–392 (TYMFYIARAIMLFALIPITTI) threads the bilayer. At 393–407 (RSAMSKLIKDSSYGK) the chain is on the cytoplasmic side. A helical transmembrane segment spans residues 408-428 (IFVILQLCLTLTGVVTSTIYN). The Extracellular segment spans residues 429–441 (KIYQLTLDKFIGT). The helical transmembrane segment at 442 to 462 (CFVLSSFLSFLAIVPIGVVAY) threads the bilayer. Over 463–479 (KQVPRSQQGECAEKQRS) the chain is Cytoplasmic.

The protein belongs to the major facilitator superfamily. SLC46A family. In terms of processing, glycosylated. In terms of tissue distribution, expressed on cortical epithelial cells in the thymus. Mainly expressed in the thymic cortex and is highly enriched in SCID thymus. Also expressed in lymph nodes, heart, fetal liver, brain, spleen, intestine and kidney, but not in adult liver, skin, skeletal muscle and lung. Expressed in skin epidermis.

It is found in the endosome membrane. It localises to the cell membrane. It catalyses the reaction N-acetyl-beta-D-glucosaminyl-(1-&gt;4)-1,6-anhydro-N-acetyl-beta-D-muramoyl-L-alanyl-gamma-D-glutamyl-meso-2,6-diaminopimeloyl-D-alanine(out) + n H(+)(out) = N-acetyl-beta-D-glucosaminyl-(1-&gt;4)-1,6-anhydro-N-acetyl-beta-D-muramoyl-L-alanyl-gamma-D-glutamyl-meso-2,6-diaminopimeloyl-D-alanine(in) + n H(+)(in). It carries out the reaction L-alanyl-gamma-D-glutamyl-meso-2,6-diaminopimelate(out) + n H(+)(out) = L-alanyl-gamma-D-glutamyl-meso-2,6-diaminopimelate(in) + n H(+)(in). The enzyme catalyses N-acetyl-D-muramoyl-L-alanyl-D-isoglutamine(out) + n H(+)(out) = N-acetyl-D-muramoyl-L-alanyl-D-isoglutamine(in) + n H(+)(in). The catalysed reaction is 2',3'-cGAMP(out) + n H(+)(out) = 2',3'-cGAMP(in) + n H(+)(in). It catalyses the reaction 3',3'-cGAMP(out) + n H(+)(out) = 3',3'-cGAMP(in) + n H(+)(in). Its activity is regulated as follows. Down-regulated by the anti-inflammatory drug methotrexate. Proton-coupled transporter that delivers pathogen-associated or danger-associated molecular patterns to cytosolic pattern recognition receptors as part of the innate immune response to microbes or tissue injury. Has selectivity toward muropeptides that contain the amino acid diaminopimelic acid (DAP-type peptidoglycan muropeptides) including Tri-DAP and tracheal toxin (TCT), common in Gram-negative bacteria and Gram-positive bacilli. In the context of immune recognition of skin microbiota, shuttles bacterial muropeptides across the endolysosomal membranes into the cytosol for recognition by NOD1, triggering MYD88-dependent secretion of IL1A and neutrophil recruitment in a pyroptosis-type inflammatory process. To a lesser extent and redundantly, transports muramyl dipeptides derived from most bacterial proteoglycans, eliciting NOD2 receptor activation and downstream inflammatory responses. Postulated to function as an importer of cyclic GMP-AMP dinucleotides (cGAMPs) in monocyte and macrophage cell lineages. Selectively imports cGAMPs derived from pathogenic bacteria such as 3'3'-cGAMP thus providing for differential immune recognition of pathogenic versus commensal bacteria. During tumorigenesis may transport extracellular tumor-derived 2'3'-cGAMP across the plasma membrane of M1-polarized macrophages to activate the anti-tumoral stimulator of interferon genes (STING) pathway. The transport mechanism, its electrogenicity and stoichiometry remain to be elucidated. The polypeptide is Solute carrier family 46 member 2 (Mus musculus (Mouse)).